Consider the following 229-residue polypeptide: MIDHQHLRLFQFCDSQFPTGAFSHSFGLETYIQRETVHDTETFIKWLHLFINEQLTYSDGIAMRIVYHALINNDKDKILDINQKLFVQNLPKETRIGAKQMGTRMVKLALDLYDSEWIQWYYNQMKNNKIKLHPAVCFTMLGHFLGVDVESIIDYYLYQNISSLTQNAVRAIPLGQTAGQQVVTEMIAHIEKTRHHILELDEIDFGMTAPGLELNQMEHENVHVRIFIS.

It belongs to the UreF family. As to quaternary structure, ureD, UreF and UreG form a complex that acts as a GTP-hydrolysis-dependent molecular chaperone, activating the urease apoprotein by helping to assemble the nickel containing metallocenter of UreC. The UreE protein probably delivers the nickel.

It is found in the cytoplasm. Its function is as follows. Required for maturation of urease via the functional incorporation of the urease nickel metallocenter. The polypeptide is Urease accessory protein UreF (Staphylococcus epidermidis (strain ATCC 35984 / DSM 28319 / BCRC 17069 / CCUG 31568 / BM 3577 / RP62A)).